Consider the following 253-residue polypeptide: Patatin-like phospholipase domain-containing protein 4 (253 aa).

Residues 6-176 (LSFAACGFLG…TNALPILPVG (171 aa)) form the PNPLA domain. Positions 41–45 (GASAG) match the GXSXG motif. The active-site Nucleophile is S43. D163 serves as the catalytic Proton acceptor. The DGA/G signature appears at 163–165 (DGG).

As to expression, expressed in all tissues examined, including heart, brain, placenta, lung, liver, muscle, kidney, pancreas and spleen.

The protein resides in the mitochondrion. It carries out the reaction a triacylglycerol + H2O = a diacylglycerol + a fatty acid + H(+). The enzyme catalyses a 1,2-diacyl-sn-glycero-3-phosphocholine + H2O = a 1-acyl-sn-glycero-3-phosphocholine + a fatty acid + H(+). It catalyses the reaction an all-trans-retinyl ester + H2O = all-trans-retinol + a fatty acid + H(+). The catalysed reaction is 2 a 1-acylglycerol = a 1,2-diacylglycerol + glycerol. It carries out the reaction a 1-acylglycerol + a 1,2-diacylglycerol = a triacylglycerol + glycerol. The enzyme catalyses a 1-acylglycerol + a 1,3-diacylglycerol = a triacylglycerol + glycerol. It catalyses the reaction a triacylglycerol + H2O = a 1,2-diacylglycerol + a fatty acid + H(+). The catalysed reaction is a triacylglycerol + H2O = a 1,3-diacylglycerol + a fatty acid + H(+). It carries out the reaction a triacylglycerol + all-trans-retinol = an all-trans-retinyl ester + a diacylglycerol. The enzyme catalyses 2 1-(9Z-octadecenoyl)-glycerol = 1,2-di-(9Z-octadecenoyl)-glycerol + glycerol. It catalyses the reaction 1-(9Z-octadecenoyl)-glycerol + 1,2-di-(9Z-octadecenoyl)-glycerol = 1,2,3-tri-(9Z-octadecenoyl)-glycerol + glycerol. The catalysed reaction is 1-(9Z-octadecenoyl)-glycerol + 1,3-di-(9Z-octadecenoyl)-glycerol = 1,2,3-tri-(9Z-octadecenoyl)-glycerol + glycerol. It carries out the reaction 1,2-di-(9Z-octadecenoyl)-glycerol + (9Z)-octadecenoate + H(+) = 1,2,3-tri-(9Z-octadecenoyl)-glycerol + H2O. The enzyme catalyses 1,2,3-tri-(9Z-octadecenoyl)-glycerol + H2O = 1,3-di-(9Z-octadecenoyl)-glycerol + (9Z)-octadecenoate + H(+). It catalyses the reaction all-trans-retinyl hexadecanoate + H2O = all-trans-retinol + hexadecanoate + H(+). The catalysed reaction is 1,2,3-tri-(9Z-octadecenoyl)-glycerol + all-trans-retinol = all-trans-retinyl 9Z-octadecenoate + di-(9Z)-octadecenoylglycerol. Its activity is regulated as follows. The triglyceride lipase activity is inhibited by BEL ((E)-6-(bromomethylene)-3-(1-naphthalenyl)-2H-tetrahydropyran-2-one), a suicide substrate inhibitor. Functionally, has abundant triacylglycerol lipase activity. Transfers fatty acid from triglyceride to retinol, hydrolyzes retinylesters, and generates 1,3-diacylglycerol from triglycerides. Additionally possesses acylglycerol transacylase and phospholipase A2 activities. The sequence is that of Patatin-like phospholipase domain-containing protein 4 from Homo sapiens (Human).